The following is a 266-amino-acid chain: Hydroxyacylglutathione hydrolase (266 aa).

Histidine 53, histidine 55, aspartate 57, histidine 58, histidine 118, aspartate 140, and histidine 178 together coordinate Zn(2+).

The protein belongs to the metallo-beta-lactamase superfamily. Glyoxalase II family. Monomer. The cofactor is Zn(2+).

The catalysed reaction is an S-(2-hydroxyacyl)glutathione + H2O = a 2-hydroxy carboxylate + glutathione + H(+). It participates in secondary metabolite metabolism; methylglyoxal degradation; (R)-lactate from methylglyoxal: step 2/2. In terms of biological role, thiolesterase that catalyzes the hydrolysis of S-D-lactoyl-glutathione to form glutathione and D-lactic acid. This chain is Hydroxyacylglutathione hydrolase, found in Cupriavidus metallidurans (strain ATCC 43123 / DSM 2839 / NBRC 102507 / CH34) (Ralstonia metallidurans).